We begin with the raw amino-acid sequence, 470 residues long: L-seryl-tRNA(Sec) selenium transferase (470 aa).

The residue at position 292 (Lys292) is an N6-(pyridoxal phosphate)lysine.

It belongs to the SelA family. Pyridoxal 5'-phosphate is required as a cofactor.

Its subcellular location is the cytoplasm. The catalysed reaction is L-seryl-tRNA(Sec) + selenophosphate + H(+) = L-selenocysteinyl-tRNA(Sec) + phosphate. Its pathway is aminoacyl-tRNA biosynthesis; selenocysteinyl-tRNA(Sec) biosynthesis; selenocysteinyl-tRNA(Sec) from L-seryl-tRNA(Sec) (bacterial route): step 1/1. In terms of biological role, converts seryl-tRNA(Sec) to selenocysteinyl-tRNA(Sec) required for selenoprotein biosynthesis. The protein is L-seryl-tRNA(Sec) selenium transferase of Moorella thermoacetica (strain ATCC 39073 / JCM 9320).